We begin with the raw amino-acid sequence, 241 residues long: Transcription factor HEC1 (241 aa).

The bHLH domain occupies 128 to 177 (ISKDPQSVAARHRRERISERIRILQRLVPGGTKMDTASMLDEAIHYVKFL).

Homodimer. Interacts with SPT. Interacts with BZIP30. As to expression, flowers, especially in gynoecium.

It is found in the nucleus. Its function is as follows. Required for the female reproductive tract development and fertility. The polypeptide is Transcription factor HEC1 (HEC1) (Arabidopsis thaliana (Mouse-ear cress)).